Here is a 135-residue protein sequence, read N- to C-terminus: DNA-directed RNA polymerase subunit omega (135 aa).

Belongs to the RNA polymerase subunit omega family. The RNAP catalytic core consists of 2 alpha, 1 beta, 1 beta' and 1 omega subunit. When a sigma factor is associated with the core the holoenzyme is formed, which can initiate transcription.

It catalyses the reaction RNA(n) + a ribonucleoside 5'-triphosphate = RNA(n+1) + diphosphate. Its function is as follows. Promotes RNA polymerase assembly. Latches the N- and C-terminal regions of the beta' subunit thereby facilitating its interaction with the beta and alpha subunits. This is DNA-directed RNA polymerase subunit omega from Sinorhizobium medicae (strain WSM419) (Ensifer medicae).